We begin with the raw amino-acid sequence, 175 residues long: Translation initiation factor IF-3 (175 aa).

Belongs to the IF-3 family. As to quaternary structure, monomer.

Its subcellular location is the cytoplasm. Functionally, IF-3 binds to the 30S ribosomal subunit and shifts the equilibrium between 70S ribosomes and their 50S and 30S subunits in favor of the free subunits, thus enhancing the availability of 30S subunits on which protein synthesis initiation begins. This chain is Translation initiation factor IF-3, found in Aquifex aeolicus (strain VF5).